The sequence spans 1232 residues: DNA-directed RNA polymerase subunit beta (1232 aa).

The segment at 1170-1232 is disordered; the sequence is SVDEDADELE…LDLDDFGDEH (63 aa). The span at 1171–1180 shows a compositional bias: acidic residues; the sequence is VDEDADELEV. Positions 1189 to 1198 are enriched in basic and acidic residues; the sequence is PEEKEEKEKE. The segment covering 1199-1232 has biased composition (acidic residues); sequence DSDEYDDLREEDVEPDLEELSLDDLDLDDFGDEH.

It belongs to the RNA polymerase beta chain family. In terms of assembly, the RNAP catalytic core consists of 2 alpha, 1 beta, 1 beta' and 1 omega subunit. When a sigma factor is associated with the core the holoenzyme is formed, which can initiate transcription.

It catalyses the reaction RNA(n) + a ribonucleoside 5'-triphosphate = RNA(n+1) + diphosphate. Functionally, DNA-dependent RNA polymerase catalyzes the transcription of DNA into RNA using the four ribonucleoside triphosphates as substrates. The chain is DNA-directed RNA polymerase subunit beta from Clostridium botulinum (strain Okra / Type B1).